Reading from the N-terminus, the 202-residue chain is uncharacterized protein (202 aa).

Residues 1 to 78 enclose the GST N-terminal domain; the sequence is MKLVGSYTSP…YIELMNVAPA (78 aa). Glutathione-binding positions include S9, V49, and 62–63; that span reads DS. The 120-residue stretch at 83–202 folds into the GST C-terminal domain; that stretch reads DPLESLRVRK…SFARTEPPKA (120 aa).

The protein belongs to the GST superfamily. HSP26 family.

Glutathione (GSH) transferase homolog, that might be involved in selenium metabolism. This is an uncharacterized protein from Escherichia coli (strain K12).